Reading from the N-terminus, the 290-residue chain is Membrane-spanning 4-domains subfamily A member 8 (290 aa).

Residues 1-21 (MNRPTAQGAVNLSGSKFSTAK) are compositionally biased toward polar residues. A disordered region spans residues 1-25 (MNRPTAQGAVNLSGSKFSTAKSWEP). Topologically, residues 1–108 (MNRPTAQGAV…PAQRVLKKGQ (108 aa)) are cytoplasmic. Residues 109 to 129 (VLGAIQILIGLVHIGLGSIMI) form a helical membrane-spanning segment. The Extracellular portion of the chain corresponds to 130–138 (TNLFSHYTP). The helical transmembrane segment at 139–159 (VSLYGGFPFWGGIWFIISGSL) threads the bilayer. Topologically, residues 160–174 (SVAAETQPNSPCLLN) are cytoplasmic. The chain crosses the membrane as a helical span at residues 175 to 195 (GSVGLNIFSAICSAVGIMLFI). The Extracellular segment spans residues 196–220 (TDISISSGYIYPSYYPYQENLGVRT). Residues 221-241 (GVAISSVLLIFCLLELSIASV) form a helical membrane-spanning segment. Topologically, residues 242–290 (SSHFGCQVACCHYNNPGVVIPNVYAANPVVIPEPPNPIPSYSEVVQDSR) are cytoplasmic.

The protein belongs to the MS4A family. As to expression, expressed strongly in intestine and colon and minimally in lung and ovary.

The protein resides in the membrane. Functionally, may be involved in signal transduction as a component of a multimeric receptor complex. This chain is Membrane-spanning 4-domains subfamily A member 8 (Ms4a8), found in Mus musculus (Mouse).